Consider the following 162-residue polypeptide: Xanthine-guanine phosphoribosyltransferase (162 aa).

5-phospho-alpha-D-ribose 1-diphosphate is bound by residues 41 to 42 (RG) and 92 to 100 (DDLVDTGNT). Asp-93 serves as a coordination point for Mg(2+). Asp-96 and Ile-139 together coordinate guanine. Xanthine-binding residues include Asp-96 and Ile-139. GMP contacts are provided by residues 96–100 (DTGNT) and 138–139 (WI).

It belongs to the purine/pyrimidine phosphoribosyltransferase family. XGPT subfamily. In terms of assembly, homotetramer. Requires Mg(2+) as cofactor.

It is found in the cell inner membrane. It carries out the reaction GMP + diphosphate = guanine + 5-phospho-alpha-D-ribose 1-diphosphate. The catalysed reaction is XMP + diphosphate = xanthine + 5-phospho-alpha-D-ribose 1-diphosphate. The enzyme catalyses IMP + diphosphate = hypoxanthine + 5-phospho-alpha-D-ribose 1-diphosphate. The protein operates within purine metabolism; GMP biosynthesis via salvage pathway; GMP from guanine: step 1/1. It participates in purine metabolism; XMP biosynthesis via salvage pathway; XMP from xanthine: step 1/1. Functionally, purine salvage pathway enzyme that catalyzes the transfer of the ribosyl-5-phosphate group from 5-phospho-alpha-D-ribose 1-diphosphate (PRPP) to the N9 position of the 6-oxopurines guanine and xanthine to form the corresponding ribonucleotides GMP (guanosine 5'-monophosphate) and XMP (xanthosine 5'-monophosphate), with the release of PPi. To a lesser extent, also acts on hypoxanthine. This chain is Xanthine-guanine phosphoribosyltransferase, found in Chromohalobacter salexigens (strain ATCC BAA-138 / DSM 3043 / CIP 106854 / NCIMB 13768 / 1H11).